The following is a 158-amino-acid chain: Cyclic pyranopterin monophosphate synthase (158 aa).

Residues methionine 74–histidine 76 and methionine 112–glutamate 113 contribute to the substrate site. Aspartate 127 is a catalytic residue.

It belongs to the MoaC family. In terms of assembly, homohexamer; trimer of dimers.

The enzyme catalyses (8S)-3',8-cyclo-7,8-dihydroguanosine 5'-triphosphate = cyclic pyranopterin phosphate + diphosphate. The protein operates within cofactor biosynthesis; molybdopterin biosynthesis. In terms of biological role, catalyzes the conversion of (8S)-3',8-cyclo-7,8-dihydroguanosine 5'-triphosphate to cyclic pyranopterin monophosphate (cPMP). The sequence is that of Cyclic pyranopterin monophosphate synthase from Helicobacter pylori (strain ATCC 700392 / 26695) (Campylobacter pylori).